The chain runs to 481 residues: Glutamyl-tRNA(Gln) amidotransferase subunit A (481 aa).

Catalysis depends on charge relay system residues Lys76 and Ser151. Ser175 functions as the Acyl-ester intermediate in the catalytic mechanism.

This sequence belongs to the amidase family. GatA subfamily. As to quaternary structure, heterotrimer of A, B and C subunits.

It carries out the reaction L-glutamyl-tRNA(Gln) + L-glutamine + ATP + H2O = L-glutaminyl-tRNA(Gln) + L-glutamate + ADP + phosphate + H(+). Its function is as follows. Allows the formation of correctly charged Gln-tRNA(Gln) through the transamidation of misacylated Glu-tRNA(Gln) in organisms which lack glutaminyl-tRNA synthetase. The reaction takes place in the presence of glutamine and ATP through an activated gamma-phospho-Glu-tRNA(Gln). This is Glutamyl-tRNA(Gln) amidotransferase subunit A from Chlorobaculum parvum (strain DSM 263 / NCIMB 8327) (Chlorobium vibrioforme subsp. thiosulfatophilum).